Here is a 138-residue protein sequence, read N- to C-terminus: Vesicle transport protein GOT1B (138 aa).

Methionine 1 bears the N-acetylmethionine mark. Residues 1–9 (MISLTDTQK) are Cytoplasmic-facing. A helical transmembrane segment spans residues 10 to 30 (IGMGLTGFGVFFLFFGMILFF). The Lumenal segment spans residues 31–32 (DK). The helical transmembrane segment at 33-53 (ALLAIGNVLFVAGLAFVIGLE) threads the bilayer. Over 54–68 (RTFRFFFQKHKMKAT) the chain is Cytoplasmic. The chain crosses the membrane as a helical span at residues 69-89 (GFFLGGVFVVLIGWPLIGMIF). Glutamate 90 is a topological domain (lumenal). Residues 91–109 (IYGFFLLFRGFFPVVVGFI) form a helical membrane-spanning segment. Residues 110 to 138 (RRVPVLGSLLNLPGIRSFVDKVGESNNMV) are Cytoplasmic-facing.

It belongs to the GOT1 family.

It localises to the golgi apparatus membrane. May be involved in fusion of ER-derived transport vesicles with the Golgi complex. The protein is Vesicle transport protein GOT1B of Bos taurus (Bovine).